A 262-amino-acid polypeptide reads, in one-letter code: Hydroxyethylthiazole kinase (262 aa).

Met-43 serves as a coordination point for substrate. 2 residues coordinate ATP: Arg-118 and Thr-164. Ala-191 provides a ligand contact to substrate.

The protein belongs to the Thz kinase family. Requires Mg(2+) as cofactor.

It carries out the reaction 5-(2-hydroxyethyl)-4-methylthiazole + ATP = 4-methyl-5-(2-phosphooxyethyl)-thiazole + ADP + H(+). It participates in cofactor biosynthesis; thiamine diphosphate biosynthesis; 4-methyl-5-(2-phosphoethyl)-thiazole from 5-(2-hydroxyethyl)-4-methylthiazole: step 1/1. In terms of biological role, catalyzes the phosphorylation of the hydroxyl group of 4-methyl-5-beta-hydroxyethylthiazole (THZ). The protein is Hydroxyethylthiazole kinase of Cereibacter sphaeroides (strain KD131 / KCTC 12085) (Rhodobacter sphaeroides).